Consider the following 347-residue polypeptide: Anthranilate phosphoribosyltransferase (347 aa).

5-phospho-alpha-D-ribose 1-diphosphate contacts are provided by residues G82, 85–86, T90, 92–95, 110–118, and T122; these read GD, NIST, and KHGNRAITS. G82 contacts anthranilate. Position 94 (S94) interacts with Mg(2+). N113 contributes to the anthranilate binding site. An anthranilate-binding site is contributed by R168. Mg(2+)-binding residues include D226 and E227.

Belongs to the anthranilate phosphoribosyltransferase family. In terms of assembly, homodimer. Mg(2+) is required as a cofactor.

It carries out the reaction N-(5-phospho-beta-D-ribosyl)anthranilate + diphosphate = 5-phospho-alpha-D-ribose 1-diphosphate + anthranilate. Its pathway is amino-acid biosynthesis; L-tryptophan biosynthesis; L-tryptophan from chorismate: step 2/5. In terms of biological role, catalyzes the transfer of the phosphoribosyl group of 5-phosphorylribose-1-pyrophosphate (PRPP) to anthranilate to yield N-(5'-phosphoribosyl)-anthranilate (PRA). The sequence is that of Anthranilate phosphoribosyltransferase from Caulobacter sp. (strain K31).